The primary structure comprises 258 residues: Aspartate/glutamate leucyltransferase (258 aa).

Belongs to the R-transferase family. Bpt subfamily.

The protein resides in the cytoplasm. The enzyme catalyses N-terminal L-glutamyl-[protein] + L-leucyl-tRNA(Leu) = N-terminal L-leucyl-L-glutamyl-[protein] + tRNA(Leu) + H(+). It carries out the reaction N-terminal L-aspartyl-[protein] + L-leucyl-tRNA(Leu) = N-terminal L-leucyl-L-aspartyl-[protein] + tRNA(Leu) + H(+). Functions in the N-end rule pathway of protein degradation where it conjugates Leu from its aminoacyl-tRNA to the N-termini of proteins containing an N-terminal aspartate or glutamate. This is Aspartate/glutamate leucyltransferase from Bradyrhizobium sp. (strain ORS 278).